The chain runs to 213 residues: Nucleoside triphosphate pyrophosphatase (213 aa).

Aspartate 79 functions as the Proton acceptor in the catalytic mechanism.

Belongs to the Maf family. A divalent metal cation serves as cofactor.

The protein localises to the cytoplasm. The enzyme catalyses a ribonucleoside 5'-triphosphate + H2O = a ribonucleoside 5'-phosphate + diphosphate + H(+). The catalysed reaction is a 2'-deoxyribonucleoside 5'-triphosphate + H2O = a 2'-deoxyribonucleoside 5'-phosphate + diphosphate + H(+). Its function is as follows. Nucleoside triphosphate pyrophosphatase. May have a dual role in cell division arrest and in preventing the incorporation of modified nucleotides into cellular nucleic acids. The polypeptide is Nucleoside triphosphate pyrophosphatase (Mycobacterium leprae (strain Br4923)).